The sequence spans 989 residues: Voltage-gated delayed rectifier potassium channel KCNH1 (989 aa).

Residues 1–220 (MTMAGGRRGL…LHYCVFKTTW (220 aa)) are Cytoplasmic-facing. The region spanning 14 to 94 (QNTFLENIVR…QTFENYEMNS (81 aa)) is the PAS domain. Positions 93 to 145 (NSFEILMYKKNRTPVWFFVKIAPIRNEQDKVVLFLCTFSDITAFKQPIEDDSC) constitute a PAC domain. Residues 151–162 (FARLTRALTSSR) are required for phosphatidylinositol bisphosphate binding. The chain crosses the membrane as a helical span at residues 221–241 (DWIILILTFYTAILVPYNVSF). The Extracellular portion of the chain corresponds to 242 to 248 (KTRQNNV). The helical transmembrane segment at 249–269 (AWLVVDSIVDVIFLVDIVLNF) threads the bilayer. The Cytoplasmic segment spans residues 270 to 290 (HTTFVGPAGEVISDPKLIRMN). A helical membrane pass occupies residues 291–309 (YLKTWFVIDLLSCLPYDVI). Topologically, residues 310–345 (NAFENVDEVSAFMGDPGKIGFADQIPPPLEGRESQG) are extracellular. The helical; Voltage-sensor transmembrane segment at 346 to 368 (ISSLFSSLKVVRLLRLGRVARKL) threads the bilayer. Over 369 to 377 (DHYIEYGAA) the chain is Cytoplasmic. The chain crosses the membrane as a helical span at residues 378–399 (VLVLLVCVFGLAAHWMACIWYS). The Extracellular portion of the chain corresponds to 400 to 448 (IGDYEIFDEDTKTIRNNSWLYQLAMDIGTPYQFNGSGSGKWEGGPSKNS). N-linked (GlcNAc...) asparagine glycans are attached at residues Asn-415 and Asn-433. Residues 449–470 (VYISSLYFTMTSLTSVGFGNIA) constitute an intramembrane region (pore-forming). The short motif at 463–468 (SVGFGN) is the Selectivity filter element. The Extracellular segment spans residues 471–477 (PSTDIEK). The helical transmembrane segment at 478–498 (IFAVAIMMIGSLLYATIFGNV) threads the bilayer. At 499 to 989 (TTIFQQMYAN…ESERDIFGAS (491 aa)) the chain is on the cytoplasmic side. Residues 673 to 770 (KRDALQKVLE…LDDLDVEKGN (98 aa)) are calmodulin-binding. Residues 699–701 (YNL) are interaction with cyclic nucleotide-binding pocket. Positions 855–879 (KAESMETLPERTKASGEATLKKTDS) are enriched in basic and acidic residues. 2 disordered regions span residues 855–886 (KAES…GITK) and 962–989 (RSSQ…FGAS). Residues 924–964 (ATVLEVRHELKEDIKALNAKMTNIEKQLSEILRILTSRRSS) form a CAD (involved in subunit assembly) region. Phosphoserine occurs at positions 974, 978, and 981. Basic and acidic residues predominate over residues 980-989 (ESERDIFGAS).

Belongs to the potassium channel family. H (Eag) (TC 1.A.1.20) subfamily. Kv10.1/KCNH1 sub-subfamily. In terms of assembly, homomultimer. The potassium channel is composed of a homo- or heterotetrameric complex of pore-forming alpha subunits that can associate with modulating beta subunits. Heteromultimer with KCNH5/EAG2. Interacts with ALG10B. Interacts with RABEP1. Interacts (via C-terminus) with CTTN. Interacts (via C-terminal cytoplasmic region) with Ca(2+)-bound calmodulin. Interacts with the spider kappa-theraphotoxin-Aa1a and mu/kappa-theraphotoxin-Ap1a. Channel activity is regulated via tyrosine phosphorylation/dephosphorylation by SRC and PTPN6. In terms of tissue distribution, highly expressed in brain and in myoblasts at the onset of fusion, but not in other tissues. Detected in HeLa (cervical carcinoma), SH-SY5Y (neuroblastoma) and MCF-7 (epithelial tumor) cells, but not in normal epithelial cells.

It is found in the cell membrane. The protein resides in the nucleus inner membrane. Its subcellular location is the cell projection. The protein localises to the dendrite. It localises to the axon. It is found in the presynaptic cell membrane. The protein resides in the perikaryon. Its subcellular location is the postsynaptic density membrane. The protein localises to the early endosome membrane. It catalyses the reaction K(+)(in) = K(+)(out). Its activity is regulated as follows. Channel activity is inhibited by interaction with Ca(2+)-bound calmodulin. Interaction of a single pore-forming alpha subunit with a calmodulin chain is sufficient to promote channel closure. Channel activity is not regulated by cyclic nucleotides. Channel activity is inhibited by binding intracellular phosphatidylinositol-3,5-bisphosphate and phosphatidylinositol-4,5-bisphosphate (PIP2), but is not inhibited by phosphatidylinositol 4-phosphate. Inhibited by the spider kappa-theraphotoxin-Aa1a and mu/kappa-theraphotoxin-Ap1a. Pore-forming (alpha) subunit of a voltage-gated delayed rectifier potassium channel that mediates outward-rectifying potassium currents which, on depolarization, reaches a steady-state level and do not inactivate. The activation kinetics depend on the prepulse potential and external divalent cation concentration. With negative prepulses, the current activation is delayed and slowed down several fold, whereas more positive prepulses speed up activation. The time course of activation is biphasic with a fast and a slowly activating current component. Activates at more positive membrane potentials and exhibit a steeper activation curve. Channel properties are modulated by subunit assembly. Mediates IK(NI) current in myoblasts. Involved in the regulation of cell proliferation and differentiation, in particular adipogenic and osteogenic differentiation in bone marrow-derived mesenchymal stem cells (MSCs). The polypeptide is Voltage-gated delayed rectifier potassium channel KCNH1 (Homo sapiens (Human)).